The following is a 42-amino-acid chain: Photosystem I reaction center subunit IX (42 aa).

The helical transmembrane segment at 7-27 (YLSTAPVLAAVWFGFLAGLLI) threads the bilayer.

Belongs to the PsaJ family.

It is found in the plastid. The protein resides in the chloroplast thylakoid membrane. Functionally, may help in the organization of the PsaE and PsaF subunits. This Nephroselmis olivacea (Green alga) protein is Photosystem I reaction center subunit IX.